Here is a 72-residue protein sequence, read N- to C-terminus: UPF0270 protein YheU (72 aa).

Belongs to the UPF0270 family.

This is UPF0270 protein YheU from Escherichia fergusonii (strain ATCC 35469 / DSM 13698 / CCUG 18766 / IAM 14443 / JCM 21226 / LMG 7866 / NBRC 102419 / NCTC 12128 / CDC 0568-73).